We begin with the raw amino-acid sequence, 299 residues long: Ribosomal protein L11 methyltransferase (299 aa).

S-adenosyl-L-methionine contacts are provided by threonine 152, glycine 172, aspartate 194, and asparagine 234.

Belongs to the methyltransferase superfamily. PrmA family.

It is found in the cytoplasm. It catalyses the reaction L-lysyl-[protein] + 3 S-adenosyl-L-methionine = N(6),N(6),N(6)-trimethyl-L-lysyl-[protein] + 3 S-adenosyl-L-homocysteine + 3 H(+). Functionally, methylates ribosomal protein L11. The polypeptide is Ribosomal protein L11 methyltransferase (Geobacter sulfurreducens (strain ATCC 51573 / DSM 12127 / PCA)).